We begin with the raw amino-acid sequence, 101 residues long: Urease subunit gamma (101 aa).

The protein belongs to the urease gamma subunit family. In terms of assembly, heterotrimer of UreA (gamma), UreB (beta) and UreC (alpha) subunits. Three heterotrimers associate to form the active enzyme.

It localises to the cytoplasm. The enzyme catalyses urea + 2 H2O + H(+) = hydrogencarbonate + 2 NH4(+). It participates in nitrogen metabolism; urea degradation; CO(2) and NH(3) from urea (urease route): step 1/1. In Ureaplasma urealyticum (Ureaplasma urealyticum biotype 2), this protein is Urease subunit gamma.